Here is a 191-residue protein sequence, read N- to C-terminus: uncharacterized protein (191 aa).

Disordered stretches follow at residues 1–42 (MSEE…DADA) and 145–191 (QNQE…IDLD). 2 stretches are compositionally biased toward basic and acidic residues: residues 11–26 (PRPDEADAVDETRATG) and 147–178 (QERRWTTGDTAPKDPSDPRDLDERGTDGRDEG).

In terms of assembly, it may form a heterotetramer of two glucokinase subunits (glk) with two ORF2 proteins.

Functionally, may be involved in glucose transport or metabolism. This is an uncharacterized protein from Streptomyces coelicolor (strain ATCC BAA-471 / A3(2) / M145).